The primary structure comprises 475 residues: Tubulin epsilon chain (475 aa).

148–154 (GGGTGSG) is a GTP binding site.

This sequence belongs to the tubulin family. In terms of assembly, found in a complex with TEDC1, TEDC2, TUBE1 and TUBD1.

Its subcellular location is the cytoplasm. It is found in the cytoskeleton. It localises to the microtubule organizing center. The protein localises to the centrosome. This chain is Tubulin epsilon chain (Tube1), found in Mus musculus (Mouse).